The sequence spans 437 residues: Nuclear envelope integral membrane protein 1 (437 aa).

The first 44 residues, 1–44, serve as a signal peptide directing secretion; sequence MAGGIKVSVWSAVGPGPRCWGAGGGGGATWLLLVVAGCVVCGSA. N-linked (GlcNAc...) asparagine glycosylation occurs at asparagine 123. A run of 5 helical transmembrane segments spans residues 159 to 179, 183 to 203, 214 to 234, 244 to 264, and 288 to 308; these read PKLFLVFLLGLTLFFCGDLLS, IFYYSTGMSVGIVASLLIVIF, PIYVILVGGWSFSLYLIQLVF, YWHYLLSYILTVGFMSFAVCY, and GLMYSSIQIPHVAFALIVIAL. Positions 184–295 are a; required for its colocalization with lamins at the nuclear envelope; sequence FYYSTGMSVG…GLGLMYSSIQ (112 aa). The b; required for interaction with RAN-GTP stretch occupies residues 334–403; it reads PVPPRLLTEE…LTPNEVSVHE (70 aa). The interval 334-437 is required for nuclear localization; that stretch reads PVPPRLLTEE…PTFTQNNFLT (104 aa). Phosphoserine occurs at positions 366, 419, and 420. A compositionally biased stretch (acidic residues) spans 415–425; that stretch reads DEELSSEEEGS. Residues 415–437 are disordered; it reads DEELSSEEEGSEYPTFTQNNFLT. Residues 428-437 are compositionally biased toward polar residues; it reads PTFTQNNFLT.

Belongs to the NEMP family. In terms of assembly, homooligomer. Interacts with RAN-GTP. Interacts with EMD. In terms of processing, phosphorylated. Phosphorylation may regulate its interaction with RAN-GTP. In terms of tissue distribution, in the ovary, expression is strongest in primordial follicle oocytes and rapidly declines as oocytes mature and move from the cortex (at protein level).

The protein localises to the nucleus inner membrane. It is found in the nucleus envelope. In terms of biological role, together with EMD, contributes to nuclear envelope stiffness in germ cells. Required for female fertility. Essential for normal erythropoiesis. Required for efficient nuclear envelope opening and enucleation during the late stages of erythroblast maturation. This chain is Nuclear envelope integral membrane protein 1 (Nemp1), found in Mus musculus (Mouse).